Consider the following 345-residue polypeptide: UDP-N-acetylenolpyruvoylglucosamine reductase (345 aa).

Residues 16-186 (LSVSASCIKV…TAVGIFLKKE (171 aa)) form the FAD-binding PCMH-type domain. Residue Arg162 is part of the active site. The active-site Proton donor is the Ser232. Glu328 is an active-site residue.

The protein belongs to the MurB family. FAD is required as a cofactor.

It localises to the cytoplasm. It carries out the reaction UDP-N-acetyl-alpha-D-muramate + NADP(+) = UDP-N-acetyl-3-O-(1-carboxyvinyl)-alpha-D-glucosamine + NADPH + H(+). It participates in cell wall biogenesis; peptidoglycan biosynthesis. In terms of biological role, cell wall formation. The polypeptide is UDP-N-acetylenolpyruvoylglucosamine reductase (Pectobacterium atrosepticum (strain SCRI 1043 / ATCC BAA-672) (Erwinia carotovora subsp. atroseptica)).